A 420-amino-acid polypeptide reads, in one-letter code: Anaerobic glycerol-3-phosphate dehydrogenase subunit B (420 aa).

It belongs to the anaerobic G-3-P dehydrogenase subunit B family. As to quaternary structure, composed of a catalytic GlpA/B dimer and of membrane bound GlpC. The cofactor is FMN.

It catalyses the reaction a quinone + sn-glycerol 3-phosphate = dihydroxyacetone phosphate + a quinol. The protein operates within polyol metabolism; glycerol degradation via glycerol kinase pathway; glycerone phosphate from sn-glycerol 3-phosphate (anaerobic route): step 1/1. In terms of biological role, conversion of glycerol 3-phosphate to dihydroxyacetone. Uses fumarate or nitrate as electron acceptor. In Pectobacterium carotovorum subsp. carotovorum (strain PC1), this protein is Anaerobic glycerol-3-phosphate dehydrogenase subunit B.